The chain runs to 172 residues: Small ribosomal subunit protein uS5 (172 aa).

Residues 17–80 form the S5 DRBM domain; it reads LREKMISVNR…EQARRNMFKV (64 aa).

The protein belongs to the universal ribosomal protein uS5 family. In terms of assembly, part of the 30S ribosomal subunit. Contacts proteins S4 and S8.

In terms of biological role, with S4 and S12 plays an important role in translational accuracy. Functionally, located at the back of the 30S subunit body where it stabilizes the conformation of the head with respect to the body. The chain is Small ribosomal subunit protein uS5 from Burkholderia thailandensis (strain ATCC 700388 / DSM 13276 / CCUG 48851 / CIP 106301 / E264).